The chain runs to 239 residues: Urease accessory protein UreE (239 aa).

The disordered stretch occupies residues 185 to 239 (VASPLDEPHGSGLHIHGIHSHGDGHSHSHDSHSHSHDSDHGHSHSHGDHDHDHKH). A compositionally biased stretch (basic and acidic residues) spans 204–239 (SHGDGHSHSHDSHSHSHDSDHGHSHSHGDHDHDHKH).

It belongs to the UreE family.

Its subcellular location is the cytoplasm. Its function is as follows. Involved in urease metallocenter assembly. Binds nickel. Probably functions as a nickel donor during metallocenter assembly. In Yersinia frederiksenii, this protein is Urease accessory protein UreE.